Here is a 198-residue protein sequence, read N- to C-terminus: Ribonuclease HII (198 aa).

In terms of domain architecture, RNase H type-2 spans 11–198; it reads ELIAGVDEVG…SPVRKLLENE (188 aa). A divalent metal cation-binding residues include aspartate 17, glutamate 18, and aspartate 109.

Belongs to the RNase HII family. It depends on Mn(2+) as a cofactor. Mg(2+) serves as cofactor.

The protein resides in the cytoplasm. The catalysed reaction is Endonucleolytic cleavage to 5'-phosphomonoester.. Endonuclease that specifically degrades the RNA of RNA-DNA hybrids. The protein is Ribonuclease HII of Mannheimia succiniciproducens (strain KCTC 0769BP / MBEL55E).